The sequence spans 158 residues: Endoribonuclease YbeY (158 aa).

Zn(2+) is bound by residues His-119, His-123, and Asp-129.

It belongs to the endoribonuclease YbeY family. Zn(2+) serves as cofactor.

The protein localises to the cytoplasm. In terms of biological role, single strand-specific metallo-endoribonuclease involved in late-stage 70S ribosome quality control and in maturation of the 3' terminus of the 16S rRNA. The polypeptide is Endoribonuclease YbeY (Chlamydia abortus (strain DSM 27085 / S26/3) (Chlamydophila abortus)).